Consider the following 314-residue polypeptide: Probable cell division protein WhiA (314 aa).

Positions Thr-277–Gln-311 form a DNA-binding region, H-T-H motif.

This sequence belongs to the WhiA family.

Functionally, involved in cell division and chromosome segregation. The polypeptide is Probable cell division protein WhiA (Latilactobacillus sakei subsp. sakei (strain 23K) (Lactobacillus sakei subsp. sakei)).